Reading from the N-terminus, the 377-residue chain is Chaperone protein DnaJ (377 aa).

Residues D5–G70 form the J domain. The CR-type zinc finger occupies G137–Q215. Zn(2+)-binding residues include C150, C153, C167, C170, C189, C192, C203, and C206. CXXCXGXG motif repeat units follow at residues C150–G157, C167–G174, C189–G196, and C203–G210.

This sequence belongs to the DnaJ family. Homodimer. Zn(2+) serves as cofactor.

It is found in the cytoplasm. Participates actively in the response to hyperosmotic and heat shock by preventing the aggregation of stress-denatured proteins and by disaggregating proteins, also in an autonomous, DnaK-independent fashion. Unfolded proteins bind initially to DnaJ; upon interaction with the DnaJ-bound protein, DnaK hydrolyzes its bound ATP, resulting in the formation of a stable complex. GrpE releases ADP from DnaK; ATP binding to DnaK triggers the release of the substrate protein, thus completing the reaction cycle. Several rounds of ATP-dependent interactions between DnaJ, DnaK and GrpE are required for fully efficient folding. Also involved, together with DnaK and GrpE, in the DNA replication of plasmids through activation of initiation proteins. The chain is Chaperone protein DnaJ from Cupriavidus taiwanensis (strain DSM 17343 / BCRC 17206 / CCUG 44338 / CIP 107171 / LMG 19424 / R1) (Ralstonia taiwanensis (strain LMG 19424)).